A 221-amino-acid polypeptide reads, in one-letter code: Ribosomal RNA small subunit methyltransferase G (221 aa).

S-adenosyl-L-methionine-binding positions include Gly-85, Phe-90, 136–137 (AE), and Arg-149.

It belongs to the methyltransferase superfamily. RNA methyltransferase RsmG family.

It is found in the cytoplasm. In terms of biological role, specifically methylates the N7 position of a guanine in 16S rRNA. The polypeptide is Ribosomal RNA small subunit methyltransferase G (Porphyromonas gingivalis (strain ATCC BAA-308 / W83)).